Consider the following 396-residue polypeptide: Elongation factor Tu (396 aa).

One can recognise a tr-type G domain in the interval 10-206 (KPHVNVGTIG…ALDTYIPLPE (197 aa)). Positions 19-26 (GHVDHGKT) are G1. 19-26 (GHVDHGKT) provides a ligand contact to GTP. Residue Thr-26 participates in Mg(2+) binding. The G2 stretch occupies residues 60 to 64 (GITIN). The G3 stretch occupies residues 81–84 (DCPG). GTP contacts are provided by residues 81–85 (DCPGH) and 136–139 (NKCD). The G4 stretch occupies residues 136-139 (NKCD). A G5 region spans residues 174-176 (SAK).

The protein belongs to the TRAFAC class translation factor GTPase superfamily. Classic translation factor GTPase family. EF-Tu/EF-1A subfamily. As to quaternary structure, monomer.

Its subcellular location is the cytoplasm. The enzyme catalyses GTP + H2O = GDP + phosphate + H(+). In terms of biological role, GTP hydrolase that promotes the GTP-dependent binding of aminoacyl-tRNA to the A-site of ribosomes during protein biosynthesis. The sequence is that of Elongation factor Tu from Polaromonas sp. (strain JS666 / ATCC BAA-500).